Consider the following 609-residue polypeptide: Threonine--tRNA ligase (609 aa).

An editing domain region spans residues 1–143; the sequence is MRVLYIHAER…SFKPEGAKVE (143 aa). Catalytic stretches follow at residues 195–491 and 196–491; these read PRYL…PRLP and RYLD…PRLP. Residues Cys-288, His-339, and His-460 each contribute to the Zn(2+) site.

This sequence belongs to the class-II aminoacyl-tRNA synthetase family. As to quaternary structure, homodimer. Requires Zn(2+) as cofactor.

Its subcellular location is the cytoplasm. It catalyses the reaction tRNA(Thr) + L-threonine + ATP = L-threonyl-tRNA(Thr) + AMP + diphosphate + H(+). Catalyzes the attachment of threonine to tRNA(Thr) in a two-step reaction: L-threonine is first activated by ATP to form Thr-AMP and then transferred to the acceptor end of tRNA(Thr). Also edits incorrectly charged L-seryl-tRNA(Thr). The polypeptide is Threonine--tRNA ligase (Pyrobaculum islandicum (strain DSM 4184 / JCM 9189 / GEO3)).